Here is a 90-residue protein sequence, read N- to C-terminus: MKVIPLGSRLLIKPIQEEKRTEGGIVLPDTAKEKPMKAEIVAVGNLEDADVDLHVGDKVIFSKYSGTEIKIEEEDYIIIDVEDILAKIED.

The protein belongs to the GroES chaperonin family. Heptamer of 7 subunits arranged in a ring. Interacts with the chaperonin GroEL.

The protein resides in the cytoplasm. Together with the chaperonin GroEL, plays an essential role in assisting protein folding. The GroEL-GroES system forms a nano-cage that allows encapsulation of the non-native substrate proteins and provides a physical environment optimized to promote and accelerate protein folding. GroES binds to the apical surface of the GroEL ring, thereby capping the opening of the GroEL channel. The chain is Co-chaperonin GroES from Thermosipho africanus (strain TCF52B).